Here is a 371-residue protein sequence, read N- to C-terminus: Protein maelstrom 1 (371 aa).

The segment at residues 2–68 is a DNA-binding region (HMG box); sequence AQNKPNAFMA…VLERESKTER (67 aa).

Belongs to the maelstrom family.

It localises to the cytoplasm. Its subcellular location is the nucleus. In terms of biological role, involved both in the piRNA and miRNA metabolic processes. As a component of the meiotic nuage, plays a central role during oogenesis by repressing transposable elements and preventing their mobilization, which is essential for the germline integrity. Repression of transposable elements is mediated via the piRNA metabolic process, which mediates the repression of transposable elements during meiosis by forming complexes composed of piRNAs and Piwi proteins and governs the repression of transposons. As a nuclear component, it is required for proper differentiation in the germline stem cell (GSC) lineage by repressing microRNA-7 (miR-7), thereby acting as an indirect regulator of bag-of-marbles (Bam). Acts by binding to the promoter of miR-7 gene and repressing its expression; miR-7 repression alleviates the Bam repression by miR-7, thereby allowing differentiation in the germline stem cell (GSC) lineage. The sequence is that of Protein maelstrom 1 (mael1) from Drosophila pseudoobscura pseudoobscura (Fruit fly).